The chain runs to 189 residues: uncharacterized protein (189 aa).

The next 4 membrane-spanning stretches (helical) occupy residues 49-69, 78-98, 102-122, and 124-144; these read LLGILKLITFPVLCAAGLFVF, LFHKSFQGCSGYVLATFLSLF, LTIVGIVSCITWAPGFIFPMI, and VSIAFATVETCFQIYTHLFPA. The tract at residues 165–189 is disordered; it reads SSSAPDLNYPSLPTQSASPSQRFSA.

The protein belongs to the chlamydial CPn_0442/CT_006/TC_0274 family.

The protein localises to the cell membrane. This is an uncharacterized protein from Chlamydia trachomatis serovar D (strain ATCC VR-885 / DSM 19411 / UW-3/Cx).